The chain runs to 301 residues: 4-hydroxy-tetrahydrodipicolinate synthase (301 aa).

Threonine 46 serves as a coordination point for pyruvate. Tyrosine 135 serves as the catalytic Proton donor/acceptor. Lysine 163 functions as the Schiff-base intermediate with substrate in the catalytic mechanism. Isoleucine 205 is a pyruvate binding site.

This sequence belongs to the DapA family. Homotetramer; dimer of dimers.

It localises to the cytoplasm. The enzyme catalyses L-aspartate 4-semialdehyde + pyruvate = (2S,4S)-4-hydroxy-2,3,4,5-tetrahydrodipicolinate + H2O + H(+). The protein operates within amino-acid biosynthesis; L-lysine biosynthesis via DAP pathway; (S)-tetrahydrodipicolinate from L-aspartate: step 3/4. Functionally, catalyzes the condensation of (S)-aspartate-beta-semialdehyde [(S)-ASA] and pyruvate to 4-hydroxy-tetrahydrodipicolinate (HTPA). The sequence is that of 4-hydroxy-tetrahydrodipicolinate synthase from Lacticaseibacillus casei (strain BL23) (Lactobacillus casei).